Consider the following 1085-residue polypeptide: Error-prone DNA polymerase (1085 aa).

Belongs to the DNA polymerase type-C family. DnaE2 subfamily.

Its subcellular location is the cytoplasm. It carries out the reaction DNA(n) + a 2'-deoxyribonucleoside 5'-triphosphate = DNA(n+1) + diphosphate. In terms of biological role, DNA polymerase involved in damage-induced mutagenesis and translesion synthesis (TLS). It is not the major replicative DNA polymerase. The polypeptide is Error-prone DNA polymerase (Symbiobacterium thermophilum (strain DSM 24528 / JCM 14929 / IAM 14863 / T)).